Reading from the N-terminus, the 783-residue chain is Heat shock transcription factor (783 aa).

The segment at M1–S59 is disordered. 2 stretches are compositionally biased toward low complexity: residues P11–P23 and L31–L42. Over residues N43–S59 the composition is skewed to polar residues. A DNA-binding region spans residues M78–P168. The interval V181–S262 is disordered. Composition is skewed to low complexity over residues S189–V199 and S209–G233. Residues N238–S262 are compositionally biased toward polar residues. Residues G280–L333 form an involved in trimerization region. Basic and acidic residues-rich tracts occupy residues R350 to A372 and T399 to V415. 3 disordered regions span residues R350–P554, Q599–L652, and Q736–S783. Residues G418–F448 show a composition bias toward polar residues. Low complexity-rich tracts occupy residues P452–S467, L497–S511, P522–P550, and N616–M632. A compositionally biased stretch (acidic residues) spans G742 to G752. The segment covering D753–A765 has biased composition (gly residues).

It belongs to the HSF family. As to quaternary structure, homotrimer. Homotrimerization increases the affinity of HSF1 to DNA. Interacts with transcriptional coregulator SSA1 on chromatin.

The protein localises to the nucleus. DNA-binding transcription factor that specifically binds heat shock promoter elements (HSE) and activates transcription. Together with its coregulator SSA1, activates expression of laccase LAC1 during glucose starvation. The protein is Heat shock transcription factor of Cryptococcus neoformans var. neoformans serotype D (strain JEC21 / ATCC MYA-565) (Filobasidiella neoformans).